We begin with the raw amino-acid sequence, 225 residues long: MGQEICVISFSGGQDSTTLAIWAAKRFKKVYLVGFDYAQKHSVELECAQKIASLLKLPYEIIQLDFLENITHSALFKNSNDLIGHSHVQNKDLPNSFVPNRNAIFITLLHSYAQKLGANNIALGVSQADFSGYPDCKEDFIKSIEHALNLGSNTTIKIVTPLMFLSKAQEFQMAKDLGALDLIIKETHTCYQGERKILHAYGYGCGECLACQLRKKGYEEFQARF.

10 to 20 (FSGGQDSTTLA) contributes to the ATP binding site. Zn(2+) contacts are provided by cysteine 190, cysteine 205, cysteine 208, and cysteine 211.

The protein belongs to the QueC family. Zn(2+) serves as cofactor.

The catalysed reaction is 7-carboxy-7-deazaguanine + NH4(+) + ATP = 7-cyano-7-deazaguanine + ADP + phosphate + H2O + H(+). Its pathway is purine metabolism; 7-cyano-7-deazaguanine biosynthesis. Catalyzes the ATP-dependent conversion of 7-carboxy-7-deazaguanine (CDG) to 7-cyano-7-deazaguanine (preQ(0)). This chain is 7-cyano-7-deazaguanine synthase, found in Helicobacter acinonychis (strain Sheeba).